Consider the following 408-residue polypeptide: Tryptophan synthase beta chain (408 aa).

Residue Lys-97 is modified to N6-(pyridoxal phosphate)lysine.

The protein belongs to the TrpB family. As to quaternary structure, tetramer of two alpha and two beta chains. It depends on pyridoxal 5'-phosphate as a cofactor.

It carries out the reaction (1S,2R)-1-C-(indol-3-yl)glycerol 3-phosphate + L-serine = D-glyceraldehyde 3-phosphate + L-tryptophan + H2O. Its pathway is amino-acid biosynthesis; L-tryptophan biosynthesis; L-tryptophan from chorismate: step 5/5. Functionally, the beta subunit is responsible for the synthesis of L-tryptophan from indole and L-serine. The chain is Tryptophan synthase beta chain (trpB) from Pseudomonas syringae pv. syringae.